We begin with the raw amino-acid sequence, 587 residues long: Arginine--tRNA ligase (587 aa).

A 'HIGH' region motif is present at residues 123 to 133 (ANVAKPLHVGH).

The protein belongs to the class-I aminoacyl-tRNA synthetase family. In terms of assembly, monomer.

The protein resides in the cytoplasm. It carries out the reaction tRNA(Arg) + L-arginine + ATP = L-arginyl-tRNA(Arg) + AMP + diphosphate. This Alkaliphilus oremlandii (strain OhILAs) (Clostridium oremlandii (strain OhILAs)) protein is Arginine--tRNA ligase.